The chain runs to 377 residues: E3 ubiquitin-protein ligase rififylin (377 aa).

Residues 55 to 107 form an FYVE-type zinc finger; the sequence is TGSEPSCKACGVHFASTTRKQTCLDCKKNFCMTCSSQEGNGPRLCLLCLRFRA. In terms of domain architecture, SAP 1 spans 115 to 134; that stretch reads LMKMKVKDLRDYLSLHDIST. Residues 176–249 are disordered; sequence LTQPQTSTVP…SVDSEDSFVP (74 aa). Polar residues predominate over residues 190–212; the sequence is GLPSSPAQVTSVPLAQDQETQQA. The segment covering 235–245 has biased composition (acidic residues); it reads EDETQSVDSED. 4 positions are modified to phosphoserine: Ser-240, Ser-243, Ser-246, and Ser-254. One can recognise an SAP 2 domain in the interval 264–278; that stretch reads IEGLTVRQLKEILAR. The segment at 330–365 adopts an RING-type zinc-finger fold; the sequence is CKICMDSPIDCVLLECGHMVTCTKCGKRMNECPICR.

Interacts with CASP8 and CASP10. Interacts with RIPK1 (via protein kinase domain); involved in RIPK1 ubiquitination. Interacts with PRR5L. Interacts (via RING-type zinc finger) with p53/TP53; involved in p53/TP53 ubiquitination. Interacts (via RING-type zinc finger) with MDM2; the interaction stabilizes MDM2. In terms of processing, autoubiquitinated. Post-translationally, palmitoylated. Undergoes caspase-mediated cleavage upon death-receptor activation, by TNFSF10 for instance. May be mediated by the caspases CASP8 and CASP10 in a negative feedback loop. In terms of tissue distribution, ubiquitous. Detected in heart, brain, spleen, lung, liver, skeletal muscle, kidney, testis, thymus, whole embryo and embryonic stem cells.

It is found in the cytoplasm. It localises to the cytosol. Its subcellular location is the cell membrane. The protein resides in the recycling endosome membrane. The enzyme catalyses S-ubiquitinyl-[E2 ubiquitin-conjugating enzyme]-L-cysteine + [acceptor protein]-L-lysine = [E2 ubiquitin-conjugating enzyme]-L-cysteine + N(6)-ubiquitinyl-[acceptor protein]-L-lysine.. It functions in the pathway protein modification; protein ubiquitination. In terms of biological role, E3 ubiquitin-protein ligase that regulates several biological processes through the ubiquitin-mediated proteasomal degradation of various target proteins. Mediates 'Lys-48'-linked polyubiquitination of PRR5L and its subsequent proteasomal degradation thereby indirectly regulating cell migration through the mTORC2 complex. Also ubiquitinates the caspases CASP8 and CASP10, promoting their proteasomal degradation, to negatively regulate apoptosis downstream of death domain receptors. Also negatively regulates the tumor necrosis factor-mediated signaling pathway through targeting of RIPK1 to ubiquitin-mediated proteasomal degradation. Negatively regulates p53/TP53 through its direct ubiquitination and targeting to proteasomal degradation. Indirectly, may also negatively regulate p53/TP53 through ubiquitination and degradation of SFN. May also play a role in endocytic recycling. The protein is E3 ubiquitin-protein ligase rififylin of Mus musculus (Mouse).